Consider the following 530-residue polypeptide: Rho GTPase-activating protein 36 (530 aa).

The N-terminal stretch at 1–19 (MPPLLLLSALIFLVNVLGG) is a signal peptide. The Rho-GAP domain maps to 209–409 (MSLNPIAKQI…AMIDNWDVLF (201 aa)). The interval 471–512 (GQSKPFDEGSSEEPAVPPGTARSHDDEEGAGNPLILEQDRPL) is disordered.

In terms of assembly, may interacts (via the Rho-GAP domain) with the active form of RAC1.

GTPase activator for the Rho-type GTPases by converting them to an inactive GDP-bound state. The sequence is that of Rho GTPase-activating protein 36 (ARHGAP36) from Bos taurus (Bovine).